Reading from the N-terminus, the 289-residue chain is 4-hydroxy-tetrahydrodipicolinate synthase (289 aa).

Residue T44 coordinates pyruvate. Y130 acts as the Proton donor/acceptor in catalysis. The active-site Schiff-base intermediate with substrate is the K158. I200 is a binding site for pyruvate.

It belongs to the DapA family. In terms of assembly, homotetramer; dimer of dimers.

Its subcellular location is the cytoplasm. The enzyme catalyses L-aspartate 4-semialdehyde + pyruvate = (2S,4S)-4-hydroxy-2,3,4,5-tetrahydrodipicolinate + H2O + H(+). Its pathway is amino-acid biosynthesis; L-lysine biosynthesis via DAP pathway; (S)-tetrahydrodipicolinate from L-aspartate: step 3/4. In terms of biological role, catalyzes the condensation of (S)-aspartate-beta-semialdehyde [(S)-ASA] and pyruvate to 4-hydroxy-tetrahydrodipicolinate (HTPA). The protein is 4-hydroxy-tetrahydrodipicolinate synthase of Archaeoglobus fulgidus (strain ATCC 49558 / DSM 4304 / JCM 9628 / NBRC 100126 / VC-16).